The chain runs to 313 residues: Lactamase-like protein nscB (313 aa).

Zn(2+)-binding residues include His97, His99, Asp101, and His102. The Proton donor/acceptor role is filled by Asp101.

Belongs to the metallo-beta-lactamase superfamily. The cofactor is Zn(2+).

The protein operates within secondary metabolite biosynthesis. In terms of biological role, lactamase-like protein; part of the gene cluster that mediates the biosynthesis of neosartoricin B, a prenylated anthracenone that probably exhibits T-cell antiproliferative activity, suggestive of a physiological role as an immunosuppressive agent. The non-reducing polyketide synthase nscA probably synthesizes and cyclizes the decaketide backbone. The hydrolase nscB then mediates the product release through hydrolysis followed by spontaneous decarboxylation. The prenyltransferase nscD catalyzes the addition of the dimethylallyl group to the aromatic C5. The FAD-dependent monooxygenase nscC is then responsible for the stereospecific hydroxylation at C2. Neosartoricin B can be converted into two additional compounds neosartoricins C and D. Neosartoricin C is a spirocyclic compound that is cyclized through the attack of C3 hydroxyl on C14, followed by dehydration. On the other hand, neosartoricin D is a further cyclized compound in which attack of C2 on C14 in neosartoricin C results in the formation of the acetal-containing dioxabicyclo-octanone ring. Both of these compounds are novel and possibly represent related metabolites of the gene cluster. In Arthroderma gypseum (strain ATCC MYA-4604 / CBS 118893) (Microsporum gypseum), this protein is Lactamase-like protein nscB.